Reading from the N-terminus, the 713-residue chain is Protein argonaute (713 aa).

The N-terminal domain stretch occupies residues 18–129 (EFIPKEVHFY…IKNIRKHKVV (112 aa)). One can recognise a PAZ domain in the interval 164–257 (HLWDFVNRDK…FAPQFCNLVF (94 aa)). The binds 3'-end of gDNA stretch occupies residues 213–218 (HIIKYY). Residues 346–488 (DVPEIIRNKN…QIMGKLGIKY (143 aa)) are mid domain. Positions 426–699 (CFALIIGKEK…FVKALGKNWK (274 aa)) constitute a Piwi domain. 3 residues coordinate a divalent metal cation: Gln457, Gln479, and Lys483. Residues 457-460 (QNIL) are binds 5'-phosphorylated end of gDNA. Residues Asp504, Glu541, and Asp570 contribute to the active site. Asp504 is a Mn(2+) binding site. Asp570 serves as a coordination point for Mn(2+). Binds 5'-phosphorylated end of gDNA regions lie at residues 625 to 632 (HKTPFGSN) and 678 to 679 (LR). Asp688 is a catalytic residue. Mn(2+) contacts are provided by Asp688 and Ile713.

The protein belongs to the argonaute family. Long pAgo subfamily. A divalent metal cation serves as cofactor.

DNA cleavage is inhibited by EDTA. Its function is as follows. A DNA-guided ssDNA endonuclease that may play a role in defense against invading genetic elements. Uses short ssDNA sequences as guides (gDNA) to bind complementary target strands, resulting in slicing of the target DNA (tDNA). Endonucleolytically cleaves tDNA (the gDNA indicates where to cleave); two major and two minor products are seen which correspond to cleavage sites between nucleotides 9/10, 10/11, 13/14, and 14/15 downstream of the target residue base-paired with the 5'-end of the gDNA. Efficient guide-dependent tDNA cleavage requires a minimal length of 15 bp and is maximal at 19 bp. Prefers gDNA with 5'-phosphorylated purines and 3'-pyrimidines; changing these bases alters the cleavage activity and patterns. Also has guide-independent activity on tDNA called 'chopping'. Probably a first round of guide-independent activity on an invading plasmid or virus would generate guide DNAs for subsequent, more efficient, guide-dependent degradation of invading nucleic acids. Has no activity on substrate with a mismatch at positions 10 and 11, on ssDNA or RNA, nor on DNA:RNA hybrids. Digests longer (750 bp) dsDNA as well as circular plasmid and naked genomic DNA, but not chromatin, in a guide DNA-independent manner. Addition of endogenous histone A3 protects DNA from cleavage, while cleavage is insensitive to methylation. When plasmid encoding active or mutated protein (Ala-541) is transformed into Sulfolobus acidocaldarius about 25-fold fewer transformants are found with active protein; reduced levels of plasmid are found in wild-type transformed cells. While S.acidocaldarius grows at a similar temperature to M.jannaschii (70 to 80 degrees Celsius) it has very different histone-like proteins, which presumably do not protect against MjAgo. Binds ssDNA, dsDNA and DNA-RNA hybrids; binding is most efficient with dsDNA. This chain is Protein argonaute, found in Methanocaldococcus jannaschii (strain ATCC 43067 / DSM 2661 / JAL-1 / JCM 10045 / NBRC 100440) (Methanococcus jannaschii).